The sequence spans 222 residues: 2-C-methyl-D-erythritol 4-phosphate cytidylyltransferase (222 aa).

This sequence belongs to the IspD/TarI cytidylyltransferase family. IspD subfamily.

The catalysed reaction is 2-C-methyl-D-erythritol 4-phosphate + CTP + H(+) = 4-CDP-2-C-methyl-D-erythritol + diphosphate. The protein operates within isoprenoid biosynthesis; isopentenyl diphosphate biosynthesis via DXP pathway; isopentenyl diphosphate from 1-deoxy-D-xylulose 5-phosphate: step 2/6. Its function is as follows. Catalyzes the formation of 4-diphosphocytidyl-2-C-methyl-D-erythritol from CTP and 2-C-methyl-D-erythritol 4-phosphate (MEP). In Azobacteroides pseudotrichonymphae genomovar. CFP2, this protein is 2-C-methyl-D-erythritol 4-phosphate cytidylyltransferase.